We begin with the raw amino-acid sequence, 303 residues long: Nucleotide-binding protein USA300HOU_0794 (303 aa).

Position 18–25 (18–25) interacts with ATP; it reads GLSGAGKS. 69-72 serves as a coordination point for GTP; it reads DLRG.

It belongs to the RapZ-like family.

Its function is as follows. Displays ATPase and GTPase activities. This chain is Nucleotide-binding protein USA300HOU_0794, found in Staphylococcus aureus (strain USA300 / TCH1516).